An 81-amino-acid chain; its full sequence is ATP synthase subunit c, chloroplastic (81 aa).

Transmembrane regions (helical) follow at residues 3-23 (PLIASASVIAAGLAVGLASIG) and 57-77 (LAFMEALTIYGLVVALALLFA).

The protein belongs to the ATPase C chain family. In terms of assembly, F-type ATPases have 2 components, F(1) - the catalytic core - and F(0) - the membrane proton channel. F(1) has five subunits: alpha(3), beta(3), gamma(1), delta(1), epsilon(1). F(0) has four main subunits: a(1), b(1), b'(1) and c(10-14). The alpha and beta chains form an alternating ring which encloses part of the gamma chain. F(1) is attached to F(0) by a central stalk formed by the gamma and epsilon chains, while a peripheral stalk is formed by the delta, b and b' chains.

Its subcellular location is the plastid. The protein localises to the chloroplast thylakoid membrane. F(1)F(0) ATP synthase produces ATP from ADP in the presence of a proton or sodium gradient. F-type ATPases consist of two structural domains, F(1) containing the extramembraneous catalytic core and F(0) containing the membrane proton channel, linked together by a central stalk and a peripheral stalk. During catalysis, ATP synthesis in the catalytic domain of F(1) is coupled via a rotary mechanism of the central stalk subunits to proton translocation. Its function is as follows. Key component of the F(0) channel; it plays a direct role in translocation across the membrane. A homomeric c-ring of between 10-14 subunits forms the central stalk rotor element with the F(1) delta and epsilon subunits. This is ATP synthase subunit c, chloroplastic from Chaetosphaeridium globosum (Charophycean green alga).